A 122-amino-acid chain; its full sequence is Biogenesis of lysosome-related organelles complex 1 subunit CNL1 (122 aa).

Residues 1 to 10 show a composition bias toward basic and acidic residues; sequence MQDNSSHSRE. The interval 1–21 is disordered; sequence MQDNSSHSRESASAGDDPLGI. The stretch at 63–95 forms a coiled coil; that stretch reads ENTIDKNIAKFKELLEKCDTLENHYEMLNQLAI.

Belongs to the BLOC1S4 family. As to quaternary structure, component of the biogenesis of lysosome-related organelles complex-1 (BLOC-1) composed of at least BLI1, BLS1, CNL1, KXD1, SNN1 and VAB2.

Its subcellular location is the cytoplasm. Component of the biogenesis of lysosome-related organelles complex-1 (BLOC-1), a complex that is involved in endosomal cargo sorting. This Saccharomyces cerevisiae (strain ATCC 204508 / S288c) (Baker's yeast) protein is Biogenesis of lysosome-related organelles complex 1 subunit CNL1 (CNL1).